A 170-amino-acid polypeptide reads, in one-letter code: Cathelicidin antimicrobial peptide (170 aa).

An N-terminal signal peptide occupies residues 1 to 30 (MKTQMDGHSLGRWSLVLLLLGLVMPLAIVA). A propeptide spans 31–131 (QVLSYKEAVL…DISCDKDNRR (101 aa)) (cathelin-like domain (CLD)). 2 disulfides stabilise this stretch: cysteine 86-cysteine 97 and cysteine 108-cysteine 125. An active core region spans residues 150–162 (FKRIVQRIKDFLR).

Belongs to the cathelicidin family. Monomer, homodimer or homotrimer (in vitro). Oligomerizes as tetra- or hexamer in solution (in vitro). In terms of processing, proteolytically cleaved by proteinase PRTN3 into antibacterial peptide LL-37. Proteolytically cleaved by cathepsin CTSG and neutrophil elastase ELANE. Post-translationally, resistant to proteolytic degradation in solution, and when bound to both zwitterionic (mimicking mammalian membranes) and negatively charged membranes (mimicking bacterial membranes). After secretion onto the skin surface, the CAMP gene product is processed by a serine protease-dependent mechanism into multiple novel antimicrobial peptides distinct from and shorter than cathelicidin LL-37. These peptides show enhanced antimicrobial action, acquiring the ability to kill skin pathogens such as S.aureus, E.coli and C.albicans. These peptides have lost the ability to stimulate CXCL8/IL8 release from keratinocytes. The peptides act synergistically, killing bacteria at lower concentrations when present together, and maintain activity at increased salt condition.

Its subcellular location is the secreted. The protein localises to the vesicle. Functionally, antimicrobial protein that is an integral component of the innate immune system. Binds to bacterial lipopolysaccharides (LPS). Acts via neutrophil N-formyl peptide receptors to enhance the release of CXCL2. Postsecretory processing generates multiple cathelicidin antimicrobial peptides with various lengths which act as a topical antimicrobial defense in sweat on skin. The unprocessed precursor form, cathelicidin antimicrobial peptide, inhibits the growth of Gram-negative E.coli and E.aerogenes with efficiencies comparable to that of the mature peptide LL-37 (in vitro). Its function is as follows. Antimicrobial peptide that is an integral component of the innate immune system. Binds to bacterial lipopolysaccharides (LPS). Causes membrane permeabilization by forming transmembrane pores (in vitro). Causes lysis of E.coli. Exhibits antimicrobial activity against Gram-negative bacteria such as P.aeruginosa, S.typhimurium, E.aerogenes, E.coli and P.syringae, Gram-positive bacteria such as L.monocytogenes, S.epidermidis, S.pyogenes and S.aureus, as well as vancomycin-resistant enterococci (in vitro). Exhibits antimicrobial activity against methicillin-resistant S.aureus, P.mirabilis, and C.albicans in low-salt media, but not in media containing 100 mM NaCl (in vitro). Forms chiral supramolecular assemblies with quinolone signal (PQS) molecules of P.aeruginosa, which may lead to interference of bacterial quorum signaling and perturbance of bacterial biofilm formation. May form supramolecular fiber-like assemblies on bacterial membranes. Induces cytokine and chemokine producation as well as TNF/TNFA and CSF2/GMCSF production in normal human keratinocytes. Exhibits hemolytic activity against red blood cells. In terms of biological role, exhibits antimicrobial activity against E.coli and B.megaterium (in vitro). This chain is Cathelicidin antimicrobial peptide, found in Pongo pygmaeus (Bornean orangutan).